Here is a 535-residue protein sequence, read N- to C-terminus: Bifunctional purine biosynthesis protein PurH (535 aa).

An MGS-like domain is found at 6–151 (TRLPVRRALI…KNHKDVAIVV (146 aa)).

Belongs to the PurH family.

The enzyme catalyses (6R)-10-formyltetrahydrofolate + 5-amino-1-(5-phospho-beta-D-ribosyl)imidazole-4-carboxamide = 5-formamido-1-(5-phospho-D-ribosyl)imidazole-4-carboxamide + (6S)-5,6,7,8-tetrahydrofolate. It carries out the reaction IMP + H2O = 5-formamido-1-(5-phospho-D-ribosyl)imidazole-4-carboxamide. The protein operates within purine metabolism; IMP biosynthesis via de novo pathway; 5-formamido-1-(5-phospho-D-ribosyl)imidazole-4-carboxamide from 5-amino-1-(5-phospho-D-ribosyl)imidazole-4-carboxamide (10-formyl THF route): step 1/1. It functions in the pathway purine metabolism; IMP biosynthesis via de novo pathway; IMP from 5-formamido-1-(5-phospho-D-ribosyl)imidazole-4-carboxamide: step 1/1. In Ectopseudomonas mendocina (strain ymp) (Pseudomonas mendocina), this protein is Bifunctional purine biosynthesis protein PurH.